Consider the following 190-residue polypeptide: Elongation factor P (190 aa).

It belongs to the elongation factor P family.

It localises to the cytoplasm. Its pathway is protein biosynthesis; polypeptide chain elongation. In terms of biological role, involved in peptide bond synthesis. Stimulates efficient translation and peptide-bond synthesis on native or reconstituted 70S ribosomes in vitro. Probably functions indirectly by altering the affinity of the ribosome for aminoacyl-tRNA, thus increasing their reactivity as acceptors for peptidyl transferase. The polypeptide is Elongation factor P (Sulfurihydrogenibium sp. (strain YO3AOP1)).